We begin with the raw amino-acid sequence, 123 residues long: Small ribosomal subunit protein uS12 (123 aa).

Residues 1–25 form a disordered region; it reads MPTINQLVRKPRKSRSALNKAPALQ. A 3-methylthioaspartic acid modification is found at D90.

This sequence belongs to the universal ribosomal protein uS12 family. As to quaternary structure, part of the 30S ribosomal subunit. Contacts proteins S8 and S17. May interact with IF1 in the 30S initiation complex.

In terms of biological role, with S4 and S5 plays an important role in translational accuracy. Functionally, interacts with and stabilizes bases of the 16S rRNA that are involved in tRNA selection in the A site and with the mRNA backbone. Located at the interface of the 30S and 50S subunits, it traverses the body of the 30S subunit contacting proteins on the other side and probably holding the rRNA structure together. The combined cluster of proteins S8, S12 and S17 appears to hold together the shoulder and platform of the 30S subunit. This Ehrlichia canis (strain Jake) protein is Small ribosomal subunit protein uS12.